The primary structure comprises 539 residues: Berberine bridge enzyme-like 21 (539 aa).

The signal sequence occupies residues 1-26 (MIATQTFVSVFFFVFFLVSLPFFSSA). Cys-41 and Cys-104 are joined by a disulfide. Residue Asn-79 is glycosylated (N-linked (GlcNAc...) asparagine). Positions 82–256 (STPKPAIIVT…LGYKVKLVPV (175 aa)) constitute an FAD-binding PCMH-type domain. A cross-link (6-(S-cysteinyl)-8alpha-(pros-histidyl)-FAD (His-Cys)) is located at residues 119–181 (HDYEGLSYIS…KVHGFPAGVC (63 aa)). N-linked (GlcNAc...) asparagine glycosylation is present at Asn-340.

This sequence belongs to the oxygen-dependent FAD-linked oxidoreductase family. FAD serves as cofactor. In terms of processing, the FAD cofactor is bound via a bicovalent 6-S-cysteinyl, 8alpha-N1-histidyl FAD linkage.

It localises to the secreted. The protein resides in the cell wall. This Arabidopsis thaliana (Mouse-ear cress) protein is Berberine bridge enzyme-like 21.